Reading from the N-terminus, the 106-residue chain is Large ribosomal subunit protein P1A (106 aa).

Positions 74–106 are disordered; it reads AGGGAAAEEAAEEEKEEEAKEESDDDMGFGLFD. Residues 82-100 are compositionally biased toward acidic residues; sequence EAAEEEKEEEAKEESDDDM.

Belongs to the eukaryotic ribosomal protein P1/P2 family. As to quaternary structure, component of the large ribosomal subunit (LSU). Mature ribosomes consist of a small (40S) and a large (60S) subunit. The 40S subunit contains about 32 different proteins and 1 molecule of RNA (18S). The 60S subunit contains 45 different proteins and 3 molecules of RNA (25S, 5.8S and 5S). The 5 acidic ribosomal P-proteins form the stalk structure of the 60S subunit. They are organized as a pentameric complex in which uL10/P0 interacts with 2 heterodimers, P1A-P2B and P1B-P2A. In terms of processing, phosphorylated.

It is found in the cytoplasm. Functionally, component of the ribosome, a large ribonucleoprotein complex responsible for the synthesis of proteins in the cell. The small ribosomal subunit (SSU) binds messenger RNAs (mRNAs) and translates the encoded message by selecting cognate aminoacyl-transfer RNA (tRNA) molecules. The large subunit (LSU) contains the ribosomal catalytic site termed the peptidyl transferase center (PTC), which catalyzes the formation of peptide bonds, thereby polymerizing the amino acids delivered by tRNAs into a polypeptide chain. The nascent polypeptides leave the ribosome through a tunnel in the LSU and interact with protein factors that function in enzymatic processing, targeting, and the membrane insertion of nascent chains at the exit of the ribosomal tunnel. The polypeptide is Large ribosomal subunit protein P1A (RPP1A) (Candida albicans (strain SC5314 / ATCC MYA-2876) (Yeast)).